The sequence spans 283 residues: Reaction center protein L chain (283 aa).

Helical transmembrane passes span 33 to 56 (GFFG…GASQ), 85 to 113 (GLWQ…RKLG), and 116 to 141 (YHVP…LLMG). Positions 154 and 174 each coordinate (7R,8Z)-bacteriochlorophyll b. A helical membrane pass occupies residues 171–200 (NPAHMLAVTLFFTTTLALALHGGLILSACN). H191 lines the Fe cation pocket. F217 contacts a ubiquinone. A helical transmembrane segment spans residues 226-252 (GTLGIHRLGYLLAINAGLWSAICIIIS). H231 is a Fe cation binding site.

It belongs to the reaction center PufL/M/PsbA/D family. As to quaternary structure, reaction center is composed of four bacteriochlorophylls, two bacteriopheophytins, two ubiquinones, one iron, and three highly hydrophobic polypeptide chains (designated L, M, and H).

The protein localises to the cellular chromatophore membrane. Its function is as follows. The reaction center is a membrane-bound complex that mediates the initial photochemical event in the electron transfer process of photosynthesis. The protein is Reaction center protein L chain (pufL) of Roseobacter denitrificans (strain ATCC 33942 / OCh 114) (Erythrobacter sp. (strain OCh 114)).